A 250-amino-acid polypeptide reads, in one-letter code: Triosephosphate isomerase (250 aa).

9–11 (NWK) provides a ligand contact to substrate. H94 (electrophile) is an active-site residue. E166 (proton acceptor) is an active-site residue. Residues G172, S212, and 233-234 (GG) contribute to the substrate site.

This sequence belongs to the triosephosphate isomerase family. In terms of assembly, homodimer.

It is found in the cytoplasm. It catalyses the reaction D-glyceraldehyde 3-phosphate = dihydroxyacetone phosphate. Its pathway is carbohydrate biosynthesis; gluconeogenesis. It participates in carbohydrate degradation; glycolysis; D-glyceraldehyde 3-phosphate from glycerone phosphate: step 1/1. In terms of biological role, involved in the gluconeogenesis. Catalyzes stereospecifically the conversion of dihydroxyacetone phosphate (DHAP) to D-glyceraldehyde-3-phosphate (G3P). In Clostridium novyi (strain NT), this protein is Triosephosphate isomerase.